The chain runs to 331 residues: Betaine-homocysteine S-methyltransferase (331 aa).

In terms of domain architecture, Hcy-binding spans 3 to 324 (VNQKWNWDTK…TDVLAIRKYV (322 aa)). Residues Cys243, Cys309, and Cys310 each contribute to the Zn(2+) site.

The protein belongs to the Betaine-homocysteine S-methyltransferase, BHMT family. It depends on Zn(2+) as a cofactor.

It catalyses the reaction L-homocysteine + glycine betaine = N,N-dimethylglycine + L-methionine. It participates in amino-acid biosynthesis; L-methionine biosynthesis via de novo pathway. Its function is as follows. Involved in the regulation of homocysteine metabolism. Converts betaine and homocysteine to dimethylglycine and methionine, respectively. The sequence is that of Betaine-homocysteine S-methyltransferase from Drosophila melanogaster (Fruit fly).